A 127-amino-acid chain; its full sequence is Fluoride-specific ion channel FluC (127 aa).

4 consecutive transmembrane segments (helical) span residues 4–24, 38–58, 71–91, and 104–124; these read FSIL…RYLV, YGTL…IAAF, VIGL…MDNV, and LNIL…FQLL. Na(+)-binding residues include Gly78 and Thr81.

Belongs to the fluoride channel Fluc/FEX (TC 1.A.43) family.

It is found in the cell inner membrane. The enzyme catalyses fluoride(in) = fluoride(out). Its activity is regulated as follows. Na(+) is not transported, but it plays an essential structural role and its presence is essential for fluoride channel function. Functionally, fluoride-specific ion channel. Important for reducing fluoride concentration in the cell, thus reducing its toxicity. The protein is Fluoride-specific ion channel FluC of Vibrio parahaemolyticus serotype O3:K6 (strain RIMD 2210633).